Consider the following 106-residue polypeptide: Urease subunit beta (106 aa).

It belongs to the urease beta subunit family. As to quaternary structure, heterotrimer of UreA (gamma), UreB (beta) and UreC (alpha) subunits. Three heterotrimers associate to form the active enzyme.

It is found in the cytoplasm. The enzyme catalyses urea + 2 H2O + H(+) = hydrogencarbonate + 2 NH4(+). The protein operates within nitrogen metabolism; urea degradation; CO(2) and NH(3) from urea (urease route): step 1/1. The chain is Urease subunit beta from Prochlorococcus marinus (strain MIT 9312).